The sequence spans 505 residues: 2,3-bisphosphoglycerate-independent phosphoglycerate mutase (505 aa).

Positions 12 and 62 each coordinate Mn(2+). Catalysis depends on Ser-62, which acts as the Phosphoserine intermediate. Substrate contacts are provided by residues His-123, 153–154 (RD), Arg-185, Arg-191, 257–260 (RPDR), and Lys-330. Mn(2+) contacts are provided by Asp-397, His-401, Asp-438, His-439, and His-456.

It belongs to the BPG-independent phosphoglycerate mutase family. In terms of assembly, monomer. It depends on Mn(2+) as a cofactor.

It carries out the reaction (2R)-2-phosphoglycerate = (2R)-3-phosphoglycerate. It participates in carbohydrate degradation; glycolysis; pyruvate from D-glyceraldehyde 3-phosphate: step 3/5. Catalyzes the interconversion of 2-phosphoglycerate and 3-phosphoglycerate. The protein is 2,3-bisphosphoglycerate-independent phosphoglycerate mutase of Staphylococcus aureus (strain COL).